Reading from the N-terminus, the 154-residue chain is Lipoprotein signal peptidase (154 aa).

2 helical membrane passes run 55-75 (GQFWLFYLITVIVVAAIVIYI) and 85-105 (AGVGLGLMLGGAIGNFLDRVF). Catalysis depends on residues Asp-111 and Asp-129. A helical transmembrane segment spans residues 127 to 147 (VADSALTVGVILLFVHMFFFA).

It belongs to the peptidase A8 family.

It is found in the cell membrane. The catalysed reaction is Release of signal peptides from bacterial membrane prolipoproteins. Hydrolyzes -Xaa-Yaa-Zaa-|-(S,diacylglyceryl)Cys-, in which Xaa is hydrophobic (preferably Leu), and Yaa (Ala or Ser) and Zaa (Gly or Ala) have small, neutral side chains.. It participates in protein modification; lipoprotein biosynthesis (signal peptide cleavage). In terms of biological role, this protein specifically catalyzes the removal of signal peptides from prolipoproteins. The polypeptide is Lipoprotein signal peptidase (Geobacillus kaustophilus (strain HTA426)).